A 76-amino-acid polypeptide reads, in one-letter code: DNA-directed RNA polymerase subunit epsilon (76 aa).

This sequence belongs to the RNA polymerase subunit epsilon family. As to quaternary structure, RNAP is composed of a core of 2 alpha, a beta and a beta' subunit. The core is associated with a delta subunit, and at least one of epsilon or omega. When a sigma factor is associated with the core the holoenzyme is formed, which can initiate transcription.

It catalyses the reaction RNA(n) + a ribonucleoside 5'-triphosphate = RNA(n+1) + diphosphate. Its function is as follows. A non-essential component of RNA polymerase (RNAP). The chain is DNA-directed RNA polymerase subunit epsilon from Lactococcus lactis subsp. cremoris (strain MG1363).